Here is a 145-residue protein sequence, read N- to C-terminus: SsrA-binding protein (145 aa).

The protein belongs to the SmpB family.

It localises to the cytoplasm. Required for rescue of stalled ribosomes mediated by trans-translation. Binds to transfer-messenger RNA (tmRNA), required for stable association of tmRNA with ribosomes. tmRNA and SmpB together mimic tRNA shape, replacing the anticodon stem-loop with SmpB. tmRNA is encoded by the ssrA gene; the 2 termini fold to resemble tRNA(Ala) and it encodes a 'tag peptide', a short internal open reading frame. During trans-translation Ala-aminoacylated tmRNA acts like a tRNA, entering the A-site of stalled ribosomes, displacing the stalled mRNA. The ribosome then switches to translate the ORF on the tmRNA; the nascent peptide is terminated with the 'tag peptide' encoded by the tmRNA and targeted for degradation. The ribosome is freed to recommence translation, which seems to be the essential function of trans-translation. This chain is SsrA-binding protein, found in Mycoplasma genitalium (strain ATCC 33530 / DSM 19775 / NCTC 10195 / G37) (Mycoplasmoides genitalium).